The chain runs to 275 residues: MTLQQQIIKALGAKPQINAEEEIRRSIDFLKSYLQTYPFIKSLVLGISGGQDSTLAGKLCQMAINELRQETGNESLQFIAVRLPYGVQADEQDCQDAIAFIQPDRVLTVNIKGAVLASEQALREAGIELSDFVRGNEKARERMKAQYSIAGMTSGVVVGTDHAAEAITGFFTKYGDGGTDINPLYRLNKRQGKQLLAALGCPEHLYKKAPTADLEDDRPSLPDEVALGVTYDNIDDYLEGKNVPEQVARTIENWYLKTEHKRRPPITVFDDFWKK.

46–53 (GISGGQDS) provides a ligand contact to ATP. Residue D52 participates in Mg(2+) binding. R140 is a binding site for deamido-NAD(+). Residue T160 coordinates ATP. E165 is a binding site for Mg(2+). K173 and D180 together coordinate deamido-NAD(+). 2 residues coordinate ATP: K189 and T211. 260–261 (HK) is a binding site for deamido-NAD(+).

This sequence belongs to the NAD synthetase family. In terms of assembly, homodimer.

It carries out the reaction deamido-NAD(+) + NH4(+) + ATP = AMP + diphosphate + NAD(+) + H(+). It participates in cofactor biosynthesis; NAD(+) biosynthesis; NAD(+) from deamido-NAD(+) (ammonia route): step 1/1. In terms of biological role, catalyzes the ATP-dependent amidation of deamido-NAD to form NAD. Uses ammonia as a nitrogen source. This is NH(3)-dependent NAD(+) synthetase from Escherichia coli O6:K15:H31 (strain 536 / UPEC).